Here is a 256-residue protein sequence, read N- to C-terminus: Methylesterase 9 (256 aa).

Ser78 acts as the Acyl-ester intermediate in catalysis. Catalysis depends on charge relay system residues Asp206 and His234.

Belongs to the AB hydrolase superfamily. Methylesterase family.

It catalyses the reaction methyl (indol-3-yl)acetate + H2O = (indol-3-yl)acetate + methanol + H(+). The catalysed reaction is methyl (-)-jasmonate + H2O = jasmonate + methanol + H(+). It carries out the reaction methyl salicylate + H2O = salicylate + methanol + H(+). It participates in plant hormone biosynthesis. The protein operates within lipid metabolism; oxylipin biosynthesis. With respect to regulation, esterase activity is down-regulated by salicylic acid (SA). Methylesterase shown to have carboxylesterase activity, methyl indole-3-acetic acid (MeIAA) esterase activity, methyl salicylate (MeSA) esterase activity and methyl jasmonate (MeJA) esterase activity in vitro. Required to convert methyl salicylate (MeSA) to salicylic acid (SA) as part of the signal transduction pathways that activate systemic acquired resistance in systemic tissue. MeSA is believed to be an inactive form that needs to be demethylated to exert a biological effect. The polypeptide is Methylesterase 9 (Arabidopsis thaliana (Mouse-ear cress)).